The primary structure comprises 385 residues: Glucans biosynthesis protein C (385 aa).

A run of 10 helical transmembrane segments spans residues 17–37 (AWLM…SHTW), 60–80 (MQVF…RYPL), 91–111 (VGIP…IMLQ), 137–157 (ISHL…VWIF), 173–193 (KFSM…YAVI), 212–232 (FIVM…LAFI), 239–259 (LFTT…VAYL), 274–294 (TESV…FSFG), 311–331 (ASLF…AYIT), and 338–358 (WLGF…LYEI).

It belongs to the acyltransferase 3 family. OpgC subfamily.

The protein localises to the cell membrane. The protein operates within glycan metabolism; osmoregulated periplasmic glucan (OPG) biosynthesis. Functionally, necessary for the succinyl substitution of periplasmic glucans. Could catalyze the transfer of succinyl residues from the cytoplasmic side of the membrane to the nascent glucan backbones on the periplasmic side of the membrane. The protein is Glucans biosynthesis protein C of Escherichia coli (strain K12 / MC4100 / BW2952).